Reading from the N-terminus, the 409-residue chain is Putative lipoate-protein ligase A (409 aa).

One can recognise a BPL/LPL catalytic domain in the interval Gly146 to Gly330. ATP is bound by residues Arg188, Gly193–Leu196, and Lys249. Lys249 is a binding site for (R)-lipoate.

This sequence belongs to the LplA family. As to quaternary structure, monomer.

The enzyme catalyses L-lysyl-[lipoyl-carrier protein] + (R)-lipoate + ATP = N(6)-[(R)-lipoyl]-L-lysyl-[lipoyl-carrier protein] + AMP + diphosphate + H(+). It participates in protein modification; protein lipoylation via exogenous pathway; protein N(6)-(lipoyl)lysine from lipoate: step 1/2. The protein operates within protein modification; protein lipoylation via exogenous pathway; protein N(6)-(lipoyl)lysine from lipoate: step 2/2. Its function is as follows. Catalyzes both the ATP-dependent activation of exogenously supplied lipoate to lipoyl-AMP and the transfer of the activated lipoyl onto the lipoyl domains of lipoate-dependent enzymes. This Saccharomyces cerevisiae (strain ATCC 204508 / S288c) (Baker's yeast) protein is Putative lipoate-protein ligase A (AIM22).